We begin with the raw amino-acid sequence, 571 residues long: Protein dead ringer homolog (571 aa).

Disordered regions lie at residues 45–117 (QHQQ…EPDK) and 190–229 (KRMQ…SCNG). Residues 49-77 (RMMEQHKNDDVISNDVRCDDFSDGGERQR) show a composition bias toward basic and acidic residues. Polar residues predominate over residues 195–206 (DHNIQQSTNHIP). Over residues 207–224 (TPSSASSHTSSGSVTSQT) the composition is skewed to low complexity. One can recognise an ARID domain in the interval 249-341 (DIKRKEFLDD…YLYPFECERE (93 aa)). Over residues 459–471 (AAHHAAQQAAQHQ) the composition is skewed to low complexity. Residues 459 to 528 (AAHHAAQQAA…GDRGRHNEMS (70 aa)) form a disordered region. In terms of domain architecture, REKLES spans 473–558 (SLKKEIDSDY…GVLFAHSPNH (86 aa)). Basic and acidic residues-rich tracts occupy residues 487-507 (PPEK…DNQR) and 518-527 (MGDRGRHNEM).

Its subcellular location is the nucleus. In terms of biological role, transcription factor. The chain is Protein dead ringer homolog (Ci-DRIL1/2) from Ciona intestinalis (Transparent sea squirt).